A 240-amino-acid polypeptide reads, in one-letter code: Uridylate kinase (240 aa).

13–16 (KASG) lines the ATP pocket. The interval 21 to 26 (GSQGFG) is involved in allosteric activation by GTP. Gly55 is a binding site for UMP. Residues Gly56 and Arg60 each coordinate ATP. Residues Asp75 and 136–143 (TGNPFFTT) contribute to the UMP site. Residues Thr163, Gln164, Tyr169, and Asp172 each contribute to the ATP site.

This sequence belongs to the UMP kinase family. As to quaternary structure, homohexamer.

It localises to the cytoplasm. The enzyme catalyses UMP + ATP = UDP + ADP. It participates in pyrimidine metabolism; CTP biosynthesis via de novo pathway; UDP from UMP (UMPK route): step 1/1. Allosterically activated by GTP. Inhibited by UTP. Catalyzes the reversible phosphorylation of UMP to UDP. This Rhizobium meliloti (strain 1021) (Ensifer meliloti) protein is Uridylate kinase.